Here is a 235-residue protein sequence, read N- to C-terminus: Small ribosomal subunit protein uS3 (235 aa).

Residues 39 to 107 enclose the KH type-2 domain; sequence IRTYIENELK…ETHLNIVEVR (69 aa). Residues 215–235 are disordered; that stretch reads SERRAVEGAGDGGGQRRRENA.

This sequence belongs to the universal ribosomal protein uS3 family. As to quaternary structure, part of the 30S ribosomal subunit. Forms a tight complex with proteins S10 and S14.

Functionally, binds the lower part of the 30S subunit head. Binds mRNA in the 70S ribosome, positioning it for translation. The polypeptide is Small ribosomal subunit protein uS3 (Chelativorans sp. (strain BNC1)).